A 116-amino-acid chain; its full sequence is Large ribosomal subunit protein bL17 (116 aa).

Belongs to the bacterial ribosomal protein bL17 family. Part of the 50S ribosomal subunit. Contacts protein L32.

The sequence is that of Large ribosomal subunit protein bL17 from Synechococcus sp. (strain CC9311).